A 248-amino-acid polypeptide reads, in one-letter code: Short-chain dehydrogenase/reductase iacG (248 aa).

Positions 14, 35, 41, 58, 120, and 187 each coordinate NADP(+).

It belongs to the short-chain dehydrogenases/reductases (SDR) family.

Its pathway is secondary metabolite biosynthesis. In terms of biological role, short-chain dehydrogenase/reductase; part of the gene cluster that mediates the biosynthesis of iso-A82775C, a enylepoxycyclohexane and biosynthetic precursor of the chloropestolide anticancer natural products. Within the cluster, the prenyltransferase iacE prenylates siccayne to generate pestalodiol E, using dimethylallyl diphosphate (DMAPP) as cosubstrate. The probable oxidoreductase iacF is then involved in the epoxidation of pestalodiol F to pestalodiol F, which is further converted to pestalofone A by the short-chain dehydrogenase/reductase iacG. Iso-A82775C is subsequently generated from pestalofone A by the short-chain dehydrogenase/reductase iacC. Iso-A82775C is further condensed with maldoxin via a Diels-Alder reaction to produce the anticancer natural products chloropestolides A to E. The protein is Short-chain dehydrogenase/reductase iacG of Pestalotiopsis fici (strain W106-1 / CGMCC3.15140).